The chain runs to 1401 residues: DNA-directed RNA polymerase subunit beta (1401 aa).

This sequence belongs to the RNA polymerase beta chain family. The RNAP catalytic core consists of 2 alpha, 1 beta, 1 beta' and 1 omega subunit. When a sigma factor is associated with the core the holoenzyme is formed, which can initiate transcription.

It catalyses the reaction RNA(n) + a ribonucleoside 5'-triphosphate = RNA(n+1) + diphosphate. In terms of biological role, DNA-dependent RNA polymerase catalyzes the transcription of DNA into RNA using the four ribonucleoside triphosphates as substrates. This Zymomonas mobilis subsp. mobilis (strain ATCC 31821 / ZM4 / CP4) protein is DNA-directed RNA polymerase subunit beta.